We begin with the raw amino-acid sequence, 100 residues long: Urease subunit gamma (100 aa).

It belongs to the urease gamma subunit family. Heterotrimer of UreA (gamma), UreB (beta) and UreC (alpha) subunits. Three heterotrimers associate to form the active enzyme.

It is found in the cytoplasm. The enzyme catalyses urea + 2 H2O + H(+) = hydrogencarbonate + 2 NH4(+). The protein operates within nitrogen metabolism; urea degradation; CO(2) and NH(3) from urea (urease route): step 1/1. The sequence is that of Urease subunit gamma from Polynucleobacter asymbioticus (strain DSM 18221 / CIP 109841 / QLW-P1DMWA-1) (Polynucleobacter necessarius subsp. asymbioticus).